Here is a 296-residue protein sequence, read N- to C-terminus: 4-diphosphocytidyl-2-C-methyl-D-erythritol kinase (296 aa).

The active site involves lysine 18. Position 103 to 113 (103 to 113) interacts with ATP; it reads PHGAGLGGGSS. Residue aspartate 146 is part of the active site.

This sequence belongs to the GHMP kinase family. IspE subfamily.

The enzyme catalyses 4-CDP-2-C-methyl-D-erythritol + ATP = 4-CDP-2-C-methyl-D-erythritol 2-phosphate + ADP + H(+). Its pathway is isoprenoid biosynthesis; isopentenyl diphosphate biosynthesis via DXP pathway; isopentenyl diphosphate from 1-deoxy-D-xylulose 5-phosphate: step 3/6. In terms of biological role, catalyzes the phosphorylation of the position 2 hydroxy group of 4-diphosphocytidyl-2C-methyl-D-erythritol. The chain is 4-diphosphocytidyl-2-C-methyl-D-erythritol kinase from Solidesulfovibrio magneticus (strain ATCC 700980 / DSM 13731 / RS-1) (Desulfovibrio magneticus).